The primary structure comprises 229 residues: Rhamnosyl O-methyltransferase (229 aa).

An N-terminal signal peptide occupies residues 1–23 (MERVRQMFSCVSGMIYRPTDSIA).

This sequence belongs to the rhamnosyl O-methyltransferase family.

Functionally, catalyzes the O-methylation of the hydroxyl group located on C-2 of the first rhamnosyl residue linked to the phenolic group of glycosylated phenolphthiocerol dimycocerosates (PGL) and p-hydroxybenzoic acid derivatives (p-HBAD). The polypeptide is Rhamnosyl O-methyltransferase (Mycobacterium leprae (strain TN)).